A 312-amino-acid chain; its full sequence is Terpene synthase 8 (312 aa).

Positions 96–101 (DDYIYE) match the DDxx(x)D/E motif motif. An NDxxSxxxD/E motif motif is present at residues 224–232 (NDCGSFKME).

The protein belongs to the terpene synthase family.

The catalysed reaction is (2E,6E)-farnesyl diphosphate + H2O = discoidol + diphosphate. Its pathway is sesquiterpene biosynthesis. Terpene synthase; part of the gene cluster that mediates the biosynthesis of the trisnorsesquiterpene discodiene which has a function during later stages of multicellular development, during the transition from fingers to Mexican hats. The terpene synthase tps8 converts its substrate farnesyl diphosphate (FDP) into the bicyclic sesquiterpene alcohol discoidol. The cytochrome P450 monooxygenase cyp521A1 then catalyzes the oxidative degradation of discoidol to form the trisnorsesquiterpene discodiene. The chain is Terpene synthase 8 from Dictyostelium discoideum (Social amoeba).